Reading from the N-terminus, the 560-residue chain is uncharacterized protein (560 aa).

The 281-residue stretch at 1-281 (MLWNWVALVG…LGSFFHVAMN (281 aa)) folds into the ABC transmembrane type-1 domain. 7 helical membrane-spanning segments follow: residues 2–22 (LWNW…SYIL), 32–52 (LLSA…RAFA), 108–128 (IYFG…LTLF), 138–160 (TAII…NKIA), 168–188 (WSIY…LITL), 223–243 (VSLM…TALL), and 249–269 (QLSV…FIPL). An ABC transporter domain is found at 314-547 (VEIKDLHFSY…QGAYAEMFQQ (234 aa)). 347 to 354 (GKSGCGKS) is a binding site for ATP.

Belongs to the ABC transporter superfamily.

The protein resides in the cell inner membrane. This is an uncharacterized protein from Haemophilus influenzae (strain ATCC 51907 / DSM 11121 / KW20 / Rd).